The primary structure comprises 193 residues: Heat shock protein beta-1 (193 aa).

Serine 15 and serine 80 each carry phosphoserine. Positions 74-182 constitute a sHSP domain; the sequence is RALSELSSGI…QSSEITIPVT (109 aa).

The protein belongs to the small heat shock protein (HSP20) family. Homooligomer. Homodimer; becomes monomeric upon activation. Heterooligomer. In terms of tissue distribution, smooth, cardiac and skeletal muscle, hardly detectable in fibroblasts or focal contacts.

The protein localises to the cytoplasm. It localises to the nucleus. It is found in the cytoskeleton. Its subcellular location is the spindle. Its function is as follows. Small heat shock protein which functions as a molecular chaperone probably maintaining denatured proteins in a folding-competent state. Plays a role in stress resistance and actin organization. This chain is Heat shock protein beta-1 (HSPB1), found in Gallus gallus (Chicken).